The primary structure comprises 196 residues: Putative NADH dehydrogenase/NAD(P)H nitroreductase XOO4023 (196 aa).

This sequence belongs to the nitroreductase family. HadB/RutE subfamily. FMN is required as a cofactor.

The sequence is that of Putative NADH dehydrogenase/NAD(P)H nitroreductase XOO4023 from Xanthomonas oryzae pv. oryzae (strain MAFF 311018).